The following is a 157-amino-acid chain: Protein-export protein SecB (157 aa).

Belongs to the SecB family. In terms of assembly, homotetramer, a dimer of dimers. One homotetramer interacts with 1 SecA dimer.

Its subcellular location is the cytoplasm. In terms of biological role, one of the proteins required for the normal export of preproteins out of the cell cytoplasm. It is a molecular chaperone that binds to a subset of precursor proteins, maintaining them in a translocation-competent state. It also specifically binds to its receptor SecA. The chain is Protein-export protein SecB from Proteus mirabilis (strain HI4320).